A 369-amino-acid polypeptide reads, in one-letter code: Glutamate 5-kinase (369 aa).

K14 lines the ATP pocket. 3 residues coordinate substrate: S56, D143, and N155. Residues 175 to 176 (SD) and 215 to 221 (TGGMASK) each bind ATP. Positions 277 to 351 (AGKIRLDQGA…GMKTQELPDD (75 aa)) constitute a PUA domain.

The protein belongs to the glutamate 5-kinase family.

The protein localises to the cytoplasm. The enzyme catalyses L-glutamate + ATP = L-glutamyl 5-phosphate + ADP. Its pathway is amino-acid biosynthesis; L-proline biosynthesis; L-glutamate 5-semialdehyde from L-glutamate: step 1/2. In terms of biological role, catalyzes the transfer of a phosphate group to glutamate to form L-glutamate 5-phosphate. The protein is Glutamate 5-kinase of Corynebacterium efficiens (strain DSM 44549 / YS-314 / AJ 12310 / JCM 11189 / NBRC 100395).